A 341-amino-acid polypeptide reads, in one-letter code: Serine proteinase inhibitor 2 (341 aa).

It belongs to the serpin family. Poxviruses subfamily.

It is found in the host cytoplasm. Viral serpin that inhibits both cysteine and serine proteinases involved in the regulation of host inflammatory and apoptosis processes. Major anti-apoptotic protein which inhibits both intrinsic and extrinsic pathways and strongly cleaves host CASP1 and CASP8 but is a rather poor inhibitor of host CASP3. Prevents the proteolytic activity of host interleukin-1-beta converting enzyme (ICE) and ICE-like enzymes. Can also block apoptosis through host tumor necrosis factor (TNF) receptor. This is Serine proteinase inhibitor 2 (OPG199) from Bos taurus (Bovine).